The following is a 215-amino-acid chain: MATAPYNYSYIFKYIIIGDMGVGKSCLLHQFTEKKFMADCPHTIGVEFGTRIIEVSGQKIKLQIWDTAGQERFRAVTRSYYRGAAGALMVYDITRRSTYNHLSSWLTDARNLTNPNTVIILIGNKADLEAQRDVTYEEAKQFAEENGLLFLEASAKTGENVEDAFLEAAKKIYQNIQDGSLDLNAAESGVQHKPSAPQGGRLTSEPQPQREGCGC.

N-acetylalanine is present on Ala2. Residues Gly21, Val22, Gly23, Lys24, Ser25, Cys26, Ala38, Asp39, Cys40, His42, and Thr43 each contribute to the GTP site. Mg(2+) is bound at residue Ser25. Residues 42 to 47 (HTIGVE) carry the Switch 1 motif. Mg(2+) is bound by residues Thr43 and Asp66. A Switch 2 motif is present at residues 68–77 (AGQERFRAVT). GTP-binding residues include Gly69, Asn124, Lys125, Asp127, Ala155, and Lys156. The tract at residues 188-215 (SGVQHKPSAPQGGRLTSEPQPQREGCGC) is disordered. S-geranylgeranyl cysteine attachment occurs at residues Cys213 and Cys215. Cys215 is modified (cysteine methyl ester).

This sequence belongs to the small GTPase superfamily. Rab family. The cofactor is Mg(2+).

Its subcellular location is the recycling endosome. The protein resides in the early endosome membrane. It is found in the golgi apparatus membrane. The protein localises to the golgi apparatus. It localises to the trans-Golgi network membrane. Its subcellular location is the cytoplasmic vesicle. The protein resides in the phagosome. It catalyses the reaction GTP + H2O = GDP + phosphate + H(+). Its activity is regulated as follows. Regulated by guanine nucleotide exchange factors (GEFs) including DENND6A and DENND6B which promote the exchange of bound GDP for free GTP. Regulated by GTPase activating proteins (GAPs) which increase the GTP hydrolysis activity. Inhibited by GDP dissociation inhibitors (GDIs) which prevent Rab-GDP dissociation. Its function is as follows. The small GTPases Rab are key regulators of intracellular membrane trafficking, from the formation of transport vesicles to their fusion with membranes. Rabs cycle between an inactive GDP-bound form and an active GTP-bound form that is able to recruit to membranes different set of downstream effectors directly responsible for vesicle formation, movement, tethering and fusion. Involved in membrane trafficking between the Golgi complex and endosomes during early embryonic development. Regulates the Golgi to endosome transport of FGFR-containing vesicles during early development, a key process for developing basement membrane and epiblast and primitive endoderm lineages during early postimplantation development. May act by modulating the kinesin KIF16B-cargo association to endosomes. Regulates, together with its guanine nucleotide exchange factor DENND6A, the specific endocytic transport of ADAM10, N-cadherin/CDH2 shedding and cell-cell adhesion. Mediates endosomal tethering and fusion through the interaction with RUFY1 and RAB4B. Interaction with RAB11FIP1 may function in the process of neurite formation. In Gallus gallus (Chicken), this protein is Ras-related protein Rab-14 (RAB14).